Here is a 206-residue protein sequence, read N- to C-terminus: 3-isopropylmalate dehydratase small subunit (206 aa).

It belongs to the LeuD family. LeuD type 1 subfamily. Heterodimer of LeuC and LeuD.

It carries out the reaction (2R,3S)-3-isopropylmalate = (2S)-2-isopropylmalate. Its pathway is amino-acid biosynthesis; L-leucine biosynthesis; L-leucine from 3-methyl-2-oxobutanoate: step 2/4. In terms of biological role, catalyzes the isomerization between 2-isopropylmalate and 3-isopropylmalate, via the formation of 2-isopropylmaleate. This chain is 3-isopropylmalate dehydratase small subunit, found in Acidobacterium capsulatum (strain ATCC 51196 / DSM 11244 / BCRC 80197 / JCM 7670 / NBRC 15755 / NCIMB 13165 / 161).